The primary structure comprises 277 residues: Purine nucleoside phosphorylase 2 (277 aa).

Phosphate is bound by residues His-65, 85–87 (RGH), and Ala-117. A purine D-ribonucleoside is bound at residue Glu-197. A phosphate-binding site is contributed by Ser-216. Residue Asn-239 participates in a purine D-ribonucleoside binding.

The protein belongs to the PNP/MTAP phosphorylase family. In terms of assembly, hexamer. Dimer of trimers.

It carries out the reaction a purine D-ribonucleoside + phosphate = a purine nucleobase + alpha-D-ribose 1-phosphate. The protein operates within purine metabolism; xanthosine degradation. It participates in purine metabolism; purine nucleoside salvage. Rapidly inactivated by p-chloromercuriphenylsulfonic acid (p-CMB). Dithiothreitol incubation restores the activity. In terms of biological role, the purine nucleoside phosphorylases catalyze the phosphorolytic breakdown of the N-glycosidic bond in the beta-(deoxy)ribonucleoside molecules, with the formation of the corresponding free purine bases and pentose-1-phosphate. This protein can degrade all purine nucleosides including xanthosine, inosine and guanosine, but cannot cleave adenosine, deoxyadenosine or hypoxanthine arabinoside. Has a preference for the neutral over the monoanionic form of xanthosine. This Escherichia coli (strain K12) protein is Purine nucleoside phosphorylase 2 (xapA).